The following is a 353-amino-acid chain: Protein CYTOKININ-RESPONSIVE GATA TRANSCRIPTION FACTOR 1 (353 aa).

Positions 137 to 144 (IRKGAATD) match the Nuclear localization signal 1 motif. Residues 142–166 (ATDPEGGAVRKPRRRAQAHQDESQQ) are disordered. The segment at 178 to 203 (CSDCNTTKTPLWRSGPCGPKSLCNAC) adopts a GATA-type zinc-finger fold. Residues 244-251 (EKRAADVD) carry the Nuclear localization signal 2 motif.

It belongs to the type IV zinc-finger family. Class B subfamily. In terms of tissue distribution, mostly expressed in leaves and stems, and, at low levels, in roots.

It is found in the nucleus. In terms of biological role, transcriptional regulator that specifically binds 5'-GATA-3' or 5'-GAT-3' motifs within gene promoters. Influences the expression of nuclear encoded chloroplast-targeted genes. Regulates chloroplast development and promotes chlorophyll accumulation. Modulates plant architecture (e.g. height, length and width of leaf blades, and flowering tillers production) and represses tillering, probably by modulating number of cells. Promotes senescence. Involved in grain filling, panicle development and starch production. This chain is Protein CYTOKININ-RESPONSIVE GATA TRANSCRIPTION FACTOR 1, found in Oryza sativa subsp. japonica (Rice).